The sequence spans 352 residues: UDP-N-acetylglucosamine--N-acetylmuramyl-(pentapeptide) pyrophosphoryl-undecaprenol N-acetylglucosamine transferase (352 aa).

Residues 12–14 (TGG), N124, R160, S188, and Q287 contribute to the UDP-N-acetyl-alpha-D-glucosamine site.

It belongs to the glycosyltransferase 28 family. MurG subfamily.

It localises to the cell inner membrane. It carries out the reaction di-trans,octa-cis-undecaprenyl diphospho-N-acetyl-alpha-D-muramoyl-L-alanyl-D-glutamyl-meso-2,6-diaminopimeloyl-D-alanyl-D-alanine + UDP-N-acetyl-alpha-D-glucosamine = di-trans,octa-cis-undecaprenyl diphospho-[N-acetyl-alpha-D-glucosaminyl-(1-&gt;4)]-N-acetyl-alpha-D-muramoyl-L-alanyl-D-glutamyl-meso-2,6-diaminopimeloyl-D-alanyl-D-alanine + UDP + H(+). Its pathway is cell wall biogenesis; peptidoglycan biosynthesis. Cell wall formation. Catalyzes the transfer of a GlcNAc subunit on undecaprenyl-pyrophosphoryl-MurNAc-pentapeptide (lipid intermediate I) to form undecaprenyl-pyrophosphoryl-MurNAc-(pentapeptide)GlcNAc (lipid intermediate II). This chain is UDP-N-acetylglucosamine--N-acetylmuramyl-(pentapeptide) pyrophosphoryl-undecaprenol N-acetylglucosamine transferase, found in Dechloromonas aromatica (strain RCB).